The chain runs to 480 residues: Protein nucleotidyltransferase YdiU (480 aa).

ATP contacts are provided by glycine 86, glycine 88, arginine 89, lysine 109, aspartate 121, glycine 122, arginine 172, and arginine 179. Aspartate 248 functions as the Proton acceptor in the catalytic mechanism. The Mg(2+) site is built by asparagine 249 and aspartate 258. Position 258 (aspartate 258) interacts with ATP.

The protein belongs to the SELO family. It depends on Mg(2+) as a cofactor. Mn(2+) is required as a cofactor.

It catalyses the reaction L-seryl-[protein] + ATP = 3-O-(5'-adenylyl)-L-seryl-[protein] + diphosphate. The enzyme catalyses L-threonyl-[protein] + ATP = 3-O-(5'-adenylyl)-L-threonyl-[protein] + diphosphate. The catalysed reaction is L-tyrosyl-[protein] + ATP = O-(5'-adenylyl)-L-tyrosyl-[protein] + diphosphate. It carries out the reaction L-histidyl-[protein] + UTP = N(tele)-(5'-uridylyl)-L-histidyl-[protein] + diphosphate. It catalyses the reaction L-seryl-[protein] + UTP = O-(5'-uridylyl)-L-seryl-[protein] + diphosphate. The enzyme catalyses L-tyrosyl-[protein] + UTP = O-(5'-uridylyl)-L-tyrosyl-[protein] + diphosphate. Nucleotidyltransferase involved in the post-translational modification of proteins. It can catalyze the addition of adenosine monophosphate (AMP) or uridine monophosphate (UMP) to a protein, resulting in modifications known as AMPylation and UMPylation. In Salmonella heidelberg (strain SL476), this protein is Protein nucleotidyltransferase YdiU.